The chain runs to 385 residues: Tryptophan--tRNA ligase (385 aa).

The short motif at 89–98 is the 'HIGH' region element; the sequence is PSSKTMHIGH. The short motif at 268 to 272 is the 'KMSKS' region element; that stretch reads KMSAS.

This sequence belongs to the class-I aminoacyl-tRNA synthetase family. Homodimer.

The enzyme catalyses tRNA(Trp) + L-tryptophan + ATP = L-tryptophyl-tRNA(Trp) + AMP + diphosphate + H(+). In Encephalitozoon cuniculi (strain GB-M1) (Microsporidian parasite), this protein is Tryptophan--tRNA ligase.